The primary structure comprises 357 residues: Cobalt-precorrin-5B C(1)-methyltransferase (357 aa).

Belongs to the CbiD family.

It carries out the reaction Co-precorrin-5B + S-adenosyl-L-methionine = Co-precorrin-6A + S-adenosyl-L-homocysteine. It participates in cofactor biosynthesis; adenosylcobalamin biosynthesis; cob(II)yrinate a,c-diamide from sirohydrochlorin (anaerobic route): step 6/10. In terms of biological role, catalyzes the methylation of C-1 in cobalt-precorrin-5B to form cobalt-precorrin-6A. The protein is Cobalt-precorrin-5B C(1)-methyltransferase of Gloeobacter violaceus (strain ATCC 29082 / PCC 7421).